The chain runs to 247 residues: Probable transcriptional regulatory protein Swit_2142 (247 aa).

Residues 1-14 (MAGHSKFKNIMHRK) are compositionally biased toward basic residues. Residues 1-21 (MAGHSKFKNIMHRKGAQDKKR) are disordered.

This sequence belongs to the TACO1 family.

It is found in the cytoplasm. The protein is Probable transcriptional regulatory protein Swit_2142 of Rhizorhabdus wittichii (strain DSM 6014 / CCUG 31198 / JCM 15750 / NBRC 105917 / EY 4224 / RW1) (Sphingomonas wittichii).